A 284-amino-acid polypeptide reads, in one-letter code: Tropomyosin (284 aa).

Residues 1–284 are a coiled coil; it reads MDGIKKKMIA…DQTFAELTGY (284 aa). A disordered region spans residues 111-131; it reads TKLEEASKTAEESERGRKDLE.

This sequence belongs to the tropomyosin family. In terms of assembly, homodimer.

Functionally, tropomyosin, in association with the troponin complex, plays a central role in the calcium dependent regulation of muscle contraction. This is Tropomyosin from Schistosoma japonicum (Blood fluke).